The sequence spans 341 residues: Ribosomal RNA small subunit methyltransferase H (341 aa).

Residues 47 to 49, Asp-64, Phe-91, Asp-109, and Gln-116 each bind S-adenosyl-L-methionine; that span reads GGY. Residues 292 to 318 are disordered; it reads VAASEDEASRNPRARSAKLRAGVRTPA.

Belongs to the methyltransferase superfamily. RsmH family.

Its subcellular location is the cytoplasm. The catalysed reaction is cytidine(1402) in 16S rRNA + S-adenosyl-L-methionine = N(4)-methylcytidine(1402) in 16S rRNA + S-adenosyl-L-homocysteine + H(+). Its function is as follows. Specifically methylates the N4 position of cytidine in position 1402 (C1402) of 16S rRNA. The sequence is that of Ribosomal RNA small subunit methyltransferase H from Sinorhizobium fredii (strain NBRC 101917 / NGR234).